The sequence spans 611 residues: Leucine aminopeptidase 2 (611 aa).

A peptide contacts are provided by residues 135–137 (QCQ) and 265–270 (PYGGME). Residue histidine 294 coordinates Zn(2+). Glutamate 295 functions as the Proton acceptor in the catalytic mechanism. The Zn(2+) site is built by histidine 298 and glutamate 317. Tyrosine 383 (proton donor) is an active-site residue.

This sequence belongs to the peptidase M1 family. Zn(2+) is required as a cofactor.

It is found in the cytoplasm. It localises to the nucleus. It carries out the reaction an epoxide + H2O = an ethanediol. Its function is as follows. Aminopeptidase that preferentially cleaves di- and tripeptides. Also has low epoxide hydrolase activity (in vitro). Can hydrolyze the epoxide leukotriene LTA(4) but it forms preferentially 5,6-dihydroxy-7,9,11,14-eicosatetraenoic acid rather than the cytokine leukotriene B(4) as the product compared to the homologous mammalian enzyme (in vitro). This Chaetomium globosum (strain ATCC 6205 / CBS 148.51 / DSM 1962 / NBRC 6347 / NRRL 1970) (Soil fungus) protein is Leucine aminopeptidase 2.